A 295-amino-acid polypeptide reads, in one-letter code: Ribosomal protein L11 methyltransferase (295 aa).

S-adenosyl-L-methionine contacts are provided by Thr-145, Gly-166, Asp-188, and Asn-230.

It belongs to the methyltransferase superfamily. PrmA family.

It localises to the cytoplasm. It carries out the reaction L-lysyl-[protein] + 3 S-adenosyl-L-methionine = N(6),N(6),N(6)-trimethyl-L-lysyl-[protein] + 3 S-adenosyl-L-homocysteine + 3 H(+). In terms of biological role, methylates ribosomal protein L11. The protein is Ribosomal protein L11 methyltransferase of Pectobacterium carotovorum subsp. carotovorum (strain PC1).